The sequence spans 109 residues: MSCYSPCQTVACGPAPLANSCNEPCVLRCADSSVAIQPPPVVVTLPGPILSSFPQSTAVGSTASAAVGSSLSAGSVPVGARGSLGLGGFGWSGLGRGLCGTLGRGNVFC.

Position 2 is an N-acetylserine (Ser2).

It belongs to the avian keratin family.

This chain is Beta-keratin-related protein (BKJ), found in Coturnix japonica (Japanese quail).